The sequence spans 288 residues: Bifunctional protein FolD (288 aa).

NADP(+) contacts are provided by residues 163–165, Ser188, and Ile229; that span reads GRS.

Belongs to the tetrahydrofolate dehydrogenase/cyclohydrolase family. As to quaternary structure, homodimer.

It carries out the reaction (6R)-5,10-methylene-5,6,7,8-tetrahydrofolate + NADP(+) = (6R)-5,10-methenyltetrahydrofolate + NADPH. The enzyme catalyses (6R)-5,10-methenyltetrahydrofolate + H2O = (6R)-10-formyltetrahydrofolate + H(+). It participates in one-carbon metabolism; tetrahydrofolate interconversion. In terms of biological role, catalyzes the oxidation of 5,10-methylenetetrahydrofolate to 5,10-methenyltetrahydrofolate and then the hydrolysis of 5,10-methenyltetrahydrofolate to 10-formyltetrahydrofolate. The polypeptide is Bifunctional protein FolD (Campylobacter curvus (strain 525.92)).